The sequence spans 173 residues: Protein MOTHER of FT and TFL1 (173 aa).

Residue Ala2 is modified to N-acetylalanine.

Belongs to the phosphatidylethanolamine-binding protein family. In terms of tissue distribution, expressed in gametophytes and developing seeds.

It is found in the cytoplasm. May form complexes with phosphorylated ligands by interfering with kinases and their effectors. Regulates seed germination via the abscisic acid (ABA) and gibberellic acid (GA)signaling pathways. During seed germination, MFT expression is directly repressed by ABI3 or promoted by ABI5 in the ABA signaling pathway. Involved in a negative feedback regulation of ABA signaling. Promotes embryo growth by direct repression of ABI5. In the GA signaling pathway, MFT expression is promoted by the DELLA protein RGL2 during seed germination. May regulate seed germination and fertility through the brassinosteroid (BR) signaling pathway. This is Protein MOTHER of FT and TFL1 (MFT) from Arabidopsis thaliana (Mouse-ear cress).